Consider the following 244-residue polypeptide: Vesicle-associated membrane protein-associated protein SCS2 (244 aa).

An N-acetylserine modification is found at serine 2. Residues 2 to 222 (SAVEISPDVL…EAATVPAENE (221 aa)) lie on the Cytoplasmic side of the membrane. The 124-residue stretch at 3 to 126 (AVEISPDVLV…ISKKIKVKYL (124 aa)) folds into the MSP domain. At serine 106 the chain carries Phosphoserine. The segment at 135 to 219 (QNQNIQENKE…QIKEAATVPA (85 aa)) is disordered. Positions 153–168 (SEPKEVPAVVNEKEVP) are enriched in basic and acidic residues. Residues 199–211 (QTSNSTPAPQNQI) are compositionally biased toward polar residues. A helical; Anchor for type IV membrane protein transmembrane segment spans residues 223–243 (SSSMGIFILVALLILVLGWFY). Arginine 244 is a topological domain (lumenal).

This sequence belongs to the VAMP-associated protein (VAP) (TC 9.B.17) family. Interacts with OPI1. Also interacts with PBI1. Interacts with EPO1.

It is found in the endoplasmic reticulum membrane. It localises to the nucleus membrane. Acts as an endoplasmic reticulum (ER) membrane anchor for cytoplasmic proteins via binding to the FFAT motif of targeted proteins. Regulates phospholipid biosynthesis by modulating the subcellular localization of the transcriptional repressor OPI1. Also contributes to the tethering of the ER to the plasma membrane. Allows interorganelle phosphatidylserine (PtdSer) transport via a process that involves the acceptor membrane complex PDR17-PDS2 that binds to PBI1 which in turn ligates to SCS2 and phosphatidic acid present in the donor membrane, forming a zone of apposition that facilitates PtdSer transfer. The chain is Vesicle-associated membrane protein-associated protein SCS2 from Saccharomyces cerevisiae (strain ATCC 204508 / S288c) (Baker's yeast).